We begin with the raw amino-acid sequence, 790 residues long: Cadherin-6 (790 aa).

The N-terminal stretch at 1–18 (MRTYRYFLLLFWVGQPYP) is a signal peptide. The propeptide occupies 19–53 (TFSNPLSKRTSGFPAKRKALELSANSRNELSRSKR). Cadherin domains follow at residues 54 to 159 (SWMW…EPIF), 160 to 268 (TKDV…PPRF), 269 to 383 (PQST…PPVF), 384 to 486 (SKLA…DNAP), and 487 to 608 (EFAE…LIHP). The Extracellular portion of the chain corresponds to 54-615 (SWMWNQFFLL…IHPTGLSTGA (562 aa)). A glycan (N-linked (GlcNAc...) asparagine) is linked at asparagine 255. Residues 260–291 (DVNDNPPRFPQSTYQFKTPESSPPGTPIGRIK) form a disordered region. Over residues 269–279 (PQSTYQFKTPE) the composition is skewed to polar residues. Residues asparagine 399, asparagine 437, asparagine 455, and asparagine 536 are each glycosylated (N-linked (GlcNAc...) asparagine). The chain crosses the membrane as a helical span at residues 616 to 636 (LVAILLCIVILLVTVVLFAAL). Residues 637-790 (RRQRKKEPLI…YGGMDSDKDS (154 aa)) lie on the Cytoplasmic side of the membrane. Serine 786 and serine 790 each carry phosphoserine.

It localises to the cell membrane. Cadherins are calcium-dependent cell adhesion proteins. They preferentially interact with themselves in a homophilic manner in connecting cells; cadherins may thus contribute to the sorting of heterogeneous cell types. The polypeptide is Cadherin-6 (Cdh6) (Mus musculus (Mouse)).